A 293-amino-acid chain; its full sequence is Elongation factor Ts (293 aa).

The involved in Mg(2+) ion dislocation from EF-Tu stretch occupies residues Thr-80–Val-83.

Belongs to the EF-Ts family.

The protein localises to the cytoplasm. In terms of biological role, associates with the EF-Tu.GDP complex and induces the exchange of GDP to GTP. It remains bound to the aminoacyl-tRNA.EF-Tu.GTP complex up to the GTP hydrolysis stage on the ribosome. The sequence is that of Elongation factor Ts from Enterococcus faecalis (strain ATCC 700802 / V583).